Here is a 163-residue protein sequence, read N- to C-terminus: 2-C-methyl-D-erythritol 2,4-cyclodiphosphate synthase (163 aa).

A divalent metal cation is bound by residues Asp-12 and His-14. Residues 12–14 (DVH) and 38–39 (HS) contribute to the 4-CDP-2-C-methyl-D-erythritol 2-phosphate site. An a divalent metal cation-binding site is contributed by His-46. 4-CDP-2-C-methyl-D-erythritol 2-phosphate contacts are provided by residues 60-62 (DIG), 65-69 (FPDTD), 136-139 (TTTE), Phe-143, and Arg-146.

It belongs to the IspF family. In terms of assembly, homotrimer. The cofactor is a divalent metal cation.

The catalysed reaction is 4-CDP-2-C-methyl-D-erythritol 2-phosphate = 2-C-methyl-D-erythritol 2,4-cyclic diphosphate + CMP. It functions in the pathway isoprenoid biosynthesis; isopentenyl diphosphate biosynthesis via DXP pathway; isopentenyl diphosphate from 1-deoxy-D-xylulose 5-phosphate: step 4/6. In terms of biological role, involved in the biosynthesis of isopentenyl diphosphate (IPP) and dimethylallyl diphosphate (DMAPP), two major building blocks of isoprenoid compounds. Catalyzes the conversion of 4-diphosphocytidyl-2-C-methyl-D-erythritol 2-phosphate (CDP-ME2P) to 2-C-methyl-D-erythritol 2,4-cyclodiphosphate (ME-CPP) with a corresponding release of cytidine 5-monophosphate (CMP). The sequence is that of 2-C-methyl-D-erythritol 2,4-cyclodiphosphate synthase from Acinetobacter baylyi (strain ATCC 33305 / BD413 / ADP1).